A 512-amino-acid polypeptide reads, in one-letter code: Phospho-2-dehydro-3-deoxyheptonate aldolase 2, chloroplastic (512 aa).

The N-terminal 57 residues, 1 to 57 (MALTATATTRGGSALPNSCLQTPKFQSLQKPTFISSFPTNKKTKPRTKHISAVQSPP), are a transit peptide targeting the chloroplast. The interval 37–57 (FPTNKKTKPRTKHISAVQSPP) is disordered. Cys-126 serves as a coordination point for Mn(2+). Substrate contacts are provided by residues Arg-165, 324 to 325 (ER), Lys-347, and Arg-378. Positions 410, 452, and 482 each coordinate Mn(2+).

It belongs to the class-II DAHP synthase family. As to quaternary structure, homodimer. Requires Mn(2+) as cofactor. Mostly expressed in leaves and stems, and, to a lower extent, in roots, stigmas, anthers, petal tubes, petal limbs and sepals.

The protein localises to the plastid. Its subcellular location is the chloroplast. It catalyses the reaction D-erythrose 4-phosphate + phosphoenolpyruvate + H2O = 7-phospho-2-dehydro-3-deoxy-D-arabino-heptonate + phosphate. Its pathway is metabolic intermediate biosynthesis; chorismate biosynthesis; chorismate from D-erythrose 4-phosphate and phosphoenolpyruvate: step 1/7. In terms of biological role, involved in the production of volatile organic compounds (VOCs). Catalyzes an aldol-like condensation reaction between phosphoenolpyruvate (PEP) and D-erythrose 4-phosphate (E4P) to generate 3-deoxy-D-arabino-heptulosonate 7-phosphate (DAH7P) and inorganic phosphate. The chain is Phospho-2-dehydro-3-deoxyheptonate aldolase 2, chloroplastic from Petunia hybrida (Petunia).